We begin with the raw amino-acid sequence, 691 residues long: Threonine--tRNA ligase (691 aa).

One can recognise a TGS domain in the interval 1–69 (MSTPEITPAA…QQDVEVAAVP (69 aa)). The segment at 268–574 (DHRRLGQELD…LLEHYAGAFP (307 aa)) is catalytic. Zn(2+)-binding residues include Cys373, His424, and His551.

Belongs to the class-II aminoacyl-tRNA synthetase family. As to quaternary structure, homodimer. The cofactor is Zn(2+).

It localises to the cytoplasm. The enzyme catalyses tRNA(Thr) + L-threonine + ATP = L-threonyl-tRNA(Thr) + AMP + diphosphate + H(+). Its function is as follows. Catalyzes the attachment of threonine to tRNA(Thr) in a two-step reaction: L-threonine is first activated by ATP to form Thr-AMP and then transferred to the acceptor end of tRNA(Thr). Also edits incorrectly charged L-seryl-tRNA(Thr). The sequence is that of Threonine--tRNA ligase from Corynebacterium jeikeium (strain K411).